Consider the following 801-residue polypeptide: Protocadherin beta-8 (801 aa).

The signal sequence occupies residues M1–A29. At E30–L691 the chain is on the extracellular side. Cadherin domains follow at residues V36–F134, M139–F243, Y248–V348, F353–F452, and Y457–V562. C97 and C103 form a disulfide bridge. N-linked (GlcNAc...) asparagine glycosylation is found at N419 and N437. Residue N568 is glycosylated (N-linked (GlcNAc...) asparagine). Residues S569–L672 form the Cadherin 6 domain. The chain crosses the membrane as a helical span at residues V692–V710. Residues A711–K801 are Cytoplasmic-facing.

Forms homodimers in trans (molecules expressed by two different cells). Forms promiscuous heterodimers in cis (at the plasma membrane of the same cell) with other protocadherins.

The protein localises to the cell membrane. Functionally, calcium-dependent cell-adhesion protein involved in cells self-recognition and non-self discrimination. Thereby, it is involved in the establishment and maintenance of specific neuronal connections in the brain. In Pan troglodytes (Chimpanzee), this protein is Protocadherin beta-8.